Reading from the N-terminus, the 269-residue chain is Tryptophan synthase alpha chain (269 aa).

Catalysis depends on proton acceptor residues Glu-49 and Asp-60.

The protein belongs to the TrpA family. In terms of assembly, tetramer of two alpha and two beta chains.

It catalyses the reaction (1S,2R)-1-C-(indol-3-yl)glycerol 3-phosphate + L-serine = D-glyceraldehyde 3-phosphate + L-tryptophan + H2O. It participates in amino-acid biosynthesis; L-tryptophan biosynthesis; L-tryptophan from chorismate: step 5/5. Functionally, the alpha subunit is responsible for the aldol cleavage of indoleglycerol phosphate to indole and glyceraldehyde 3-phosphate. In Pseudomonas entomophila (strain L48), this protein is Tryptophan synthase alpha chain.